The sequence spans 357 residues: Peptide chain release factor 1 (357 aa).

Residue Gln236 is modified to N5-methylglutamine.

The protein belongs to the prokaryotic/mitochondrial release factor family. Methylated by PrmC. Methylation increases the termination efficiency of RF1.

The protein localises to the cytoplasm. Its function is as follows. Peptide chain release factor 1 directs the termination of translation in response to the peptide chain termination codons UAG and UAA. This is Peptide chain release factor 1 from Mycobacterium marinum (strain ATCC BAA-535 / M).